Reading from the N-terminus, the 543-residue chain is Carotenoid 9,10(9',10')-cleavage dioxygenase 1 (543 aa).

Residues His-224, His-272, His-338, and His-528 each contribute to the Fe cation site.

It belongs to the carotenoid oxygenase family. As to quaternary structure, homodimer. It depends on Fe(2+) as a cofactor.

The enzyme catalyses all-trans-zeaxanthin + 2 O2 = 4,9-dimethyldodeca-2,4,6,8,10-pentaenedial + 2 (3R)-hydroxy-beta-ionone. In terms of biological role, cleaves a variety of carotenoids at the 9-10 and 9'-10' double bonds. Probably not involved in abscisic acid biosynthesis. The sequence is that of Carotenoid 9,10(9',10')-cleavage dioxygenase 1 (CCD1) from Phaseolus vulgaris (Kidney bean).